Here is a 74-residue protein sequence, read N- to C-terminus: Dermaseptin-B3 (74 aa).

Positions Met1–Cys22 are cleaved as a signal peptide. Positions Glu23 to Glu43 are excised as a propeptide.

In terms of tissue distribution, expressed by the skin glands.

The protein resides in the secreted. Its function is as follows. Possesses a potent antimicrobial activity against Gram-positive and Gram-negative bacteria. Probably acts by disturbing membrane functions with its amphipathic structure. The chain is Dermaseptin-B3 from Phyllomedusa bicolor (Two-colored leaf frog).